A 676-amino-acid polypeptide reads, in one-letter code: MFTVTPAKIYLNQEKTPVSEQFNDVYFSNQDGLAESEYVFQQGNHLWERWIVYQEKHFVIAETGFGTGLNFLAVTSLFRQFRQQYSHSPLKHLFFISFEKYPLPKVQLQQIHQFYPQFSALSQQLCDYCLEAIQGCQRFHFAETTLDLWFGDIVDNLPQLGDYMQNRIDAWFLDGFSPSKNPQMWNDELYQQMFYYSKPQGTFSTFTAASAVRKGLVSAGFEVQKRKGYGKKRECLCGIKNAIPQQNTKAPWYLSQPASLLSEDIAIIGGGIASLFTALSLLKRGAKITLYCEDEQLALNASGNKQGAFYPQLSDDDDRNIRFYVHAFFYALQQLQWAIKQGIEFEHEFCGVALCAYDHKSAVKLAKISSYQWSKSLYQNLNKEQLSEKIGLPLDCAGGFIPQGGWLAPRQFVQNTFSYLQQLGLEIKTSQKITALDYRNLQWVLTNEQNETFNHQVVVLANGYQITDFVQTAKLPLYPVRGQVSQIPTSANLLKLKSVLCYDGYLTPADKMKQSHCLGASHIRNNKDRHFSHQEQRENQQKIQQNLASTDTDKNMDWLQDIDISANIARIGVRCSVRDRVPIMGNVPHFEQQCLDYRNIFNLRRRKQPIPDAAQWKNLYLIGALGSRGLTSAALLGETLASLIYAEPLPLSEDILHNLSPNRSWIRKLLKGTEIK.

The interval 1–241 is tRNA (mnm(5)s(2)U34)-methyltransferase; the sequence is MFTVTPAKIY…KRECLCGIKN (241 aa). The tract at residues 268–676 is FAD-dependent cmnm(5)s(2)U34 oxidoreductase; it reads IGGGIASLFT…RKLLKGTEIK (409 aa).

It in the N-terminal section; belongs to the methyltransferase superfamily. tRNA (mnm(5)s(2)U34)-methyltransferase family. In the C-terminal section; belongs to the DAO family. It depends on FAD as a cofactor.

It localises to the cytoplasm. The enzyme catalyses 5-aminomethyl-2-thiouridine(34) in tRNA + S-adenosyl-L-methionine = 5-methylaminomethyl-2-thiouridine(34) in tRNA + S-adenosyl-L-homocysteine + H(+). In terms of biological role, catalyzes the last two steps in the biosynthesis of 5-methylaminomethyl-2-thiouridine (mnm(5)s(2)U) at the wobble position (U34) in tRNA. Catalyzes the FAD-dependent demodification of cmnm(5)s(2)U34 to nm(5)s(2)U34, followed by the transfer of a methyl group from S-adenosyl-L-methionine to nm(5)s(2)U34, to form mnm(5)s(2)U34. The protein is tRNA 5-methylaminomethyl-2-thiouridine biosynthesis bifunctional protein MnmC of Histophilus somni (strain 2336) (Haemophilus somnus).